The primary structure comprises 865 residues: Eukaryotic translation initiation factor 3 subunit C (865 aa).

Disordered stretches follow at residues Met1–Lys92 and Glu206–Gly243. Composition is skewed to acidic residues over residues Ser16 to Ala54 and Asp69 to Ala80. The segment covering Val82–Lys92 has biased composition (basic and acidic residues). Residues Ala226 to Glu235 are compositionally biased toward acidic residues. Residues Phe606–Glu780 form the PCI domain. The tract at residues Ser801 to Ala865 is disordered. Over residues Gln808–Phe817 the composition is skewed to polar residues. Residues Gly822 to Phe841 show a composition bias toward gly residues.

This sequence belongs to the eIF-3 subunit C family. In terms of assembly, component of the eukaryotic translation initiation factor 3 (eIF-3) complex.

It is found in the cytoplasm. Its function is as follows. Component of the eukaryotic translation initiation factor 3 (eIF-3) complex, which is involved in protein synthesis of a specialized repertoire of mRNAs and, together with other initiation factors, stimulates binding of mRNA and methionyl-tRNAi to the 40S ribosome. The eIF-3 complex specifically targets and initiates translation of a subset of mRNAs involved in cell proliferation. This chain is Eukaryotic translation initiation factor 3 subunit C, found in Pyricularia oryzae (strain 70-15 / ATCC MYA-4617 / FGSC 8958) (Rice blast fungus).